Consider the following 261-residue polypeptide: Hemin import ATP-binding protein HmuV (261 aa).

Residues 7–243 (LRGQNLSLQF…EIIDAVYGYK (237 aa)) form the ABC transporter domain. 39-46 (GPNGAGKS) provides a ligand contact to ATP.

Belongs to the ABC transporter superfamily. Heme (hemin) importer (TC 3.A.1.14.5) family. As to quaternary structure, the complex is composed of two ATP-binding proteins (HmuV), two transmembrane proteins (HmuU) and a solute-binding protein (HmuT).

It is found in the cell inner membrane. Functionally, part of the ABC transporter complex HmuTUV involved in hemin import. Responsible for energy coupling to the transport system. The protein is Hemin import ATP-binding protein HmuV of Vibrio vulnificus (strain CMCP6).